Consider the following 446-residue polypeptide: Glutamyl-tRNA reductase (446 aa).

Substrate is bound by residues 49–52 (TCNR), S109, 114–116 (ETQ), and Q120. C50 acts as the Nucleophile in catalysis. 189-194 (GAGEMA) is an NADP(+) binding site.

The protein belongs to the glutamyl-tRNA reductase family. In terms of assembly, homodimer.

It carries out the reaction (S)-4-amino-5-oxopentanoate + tRNA(Glu) + NADP(+) = L-glutamyl-tRNA(Glu) + NADPH + H(+). It participates in porphyrin-containing compound metabolism; protoporphyrin-IX biosynthesis; 5-aminolevulinate from L-glutamyl-tRNA(Glu): step 1/2. Its function is as follows. Catalyzes the NADPH-dependent reduction of glutamyl-tRNA(Glu) to glutamate 1-semialdehyde (GSA). The protein is Glutamyl-tRNA reductase of Macrococcus caseolyticus (strain JCSC5402) (Macrococcoides caseolyticum).